The following is a 568-amino-acid chain: MRASLFPLSTSKETPADAEIVSHQLMLRAGMIRKLAAGLYTWTPLGLRVLRKVEQIVREEMDRAGAHELLMPAVQPAELWQESTRWDKYGPELLRLKDRHERDFCFGPTHEEVITDYVRREVKSYRQLPLNLYQIQTKFRDEIRPRFGVMRAREFLMKDAYSFHLDDDCLARTYQVMYETYTRIFERTGLVFRAVAADSGNIGGSVSHEFHVLAESGEDAVAFSDESDYAANVELAEAVAPAGEAPPPAETMRRVDTPGARTIDDLVRDYGLPIEKTVKTLVVHGADGGLVALLVRGDHSLNDVKATTLPQVAEPLVMAGEEEIRAAVGAGPGSLGPVELPLPCVVDRSVAVMSDFAAGANQDDAHYFGINWGRDVALPEVADLREVVAGDPSPDGRGTLEIARGIEVGHIFQLGREYSEKMKATVLNEAGDAQTVTMGCYGIGVSRVVAAAIEQNHDDNGIIWPAPIAPFQLALVPIGMNRSEAVTEQAEKLYAELQAEGVEVFFDDRDARPGVKFADMELIGIPHRLVIGDRGLKNGVVEYRGRRDSESTDVPLAELSAFLRERLG.

The protein belongs to the class-II aminoacyl-tRNA synthetase family. ProS type 1 subfamily. Homodimer.

The protein localises to the cytoplasm. The catalysed reaction is tRNA(Pro) + L-proline + ATP = L-prolyl-tRNA(Pro) + AMP + diphosphate. Its function is as follows. Catalyzes the attachment of proline to tRNA(Pro) in a two-step reaction: proline is first activated by ATP to form Pro-AMP and then transferred to the acceptor end of tRNA(Pro). As ProRS can inadvertently accommodate and process non-cognate amino acids such as alanine and cysteine, to avoid such errors it has two additional distinct editing activities against alanine. One activity is designated as 'pretransfer' editing and involves the tRNA(Pro)-independent hydrolysis of activated Ala-AMP. The other activity is designated 'posttransfer' editing and involves deacylation of mischarged Ala-tRNA(Pro). The misacylated Cys-tRNA(Pro) is not edited by ProRS. In Alkalilimnicola ehrlichii (strain ATCC BAA-1101 / DSM 17681 / MLHE-1), this protein is Proline--tRNA ligase.